Consider the following 732-residue polypeptide: Cullin-3A (732 aa).

The Cullin neddylation domain occupies 662–724; it reads DRKPQIEAAI…RDFLERDSTD (63 aa). A Glycyl lysine isopeptide (Lys-Gly) (interchain with G-Cter in NEDD8) cross-link involves residue lysine 676.

The protein belongs to the cullin family. Interacts with CSN2 and RBX1A. Interacts with BTB/POZ domain-containing proteins BPM1, BPM2, BPM3, BPM6, BT1, BT2, BT3, BT5, AT1G01640, AT1G21780 and AT5G48510. Interacts with SR1IP1. Interacts with NPR3 and NPR4. Binds to NPR1; this interaction requires NPR3 and NPR4. Post-translationally, neddylated. Deneddylated via its interaction with the COP9 signalosome (CSN) complex.

Functionally, component of the cullin-RING ubiquitin ligases (CRL), or CUL3-RBX1-BTB protein E3 ligase complexes which mediate the ubiquitination and subsequent proteasomal degradation of target proteins. The functional specificity of the CRL complex depends on the BTB domain-containing protein as the substrate recognition component. Involved in embryo pattern formation and endosperm development. Required for the normal division and organization of the root stem cells and columella root cap cells. Regulates primary root growth by an unknown pathway, but in an ethylene-dependent manner. Functions in distal root patterning, by an ethylene-independent mechanism. Functionally redundant with CUL3B. In Arabidopsis thaliana (Mouse-ear cress), this protein is Cullin-3A.